The chain runs to 942 residues: Apolipoprotein B receptor (942 aa).

Disordered regions lie at residues 66-212, 240-269, 283-487, 501-607, and 671-942; these read GLRS…VTED, ERMV…QAML, DSLG…SPER, AGPE…VPWE, and EGRG…PKPQ. Basic and acidic residues-rich tracts occupy residues 106–123, 132–143, 240–252, 312–330, and 338–352; these read QAER…DARG, PEAEPGTHRDRS, ERMV…ERAR, EADK…EAEV, and EAER…HIAE. A compositionally biased stretch (acidic residues) spans 353-370; it reads EEAMGEQETEGSFEDEER. A Phosphoserine modification is found at Ser-364. The span at 384–397 shows a compositional bias: basic and acidic residues; sequence EEVRAEESSREKRN. The span at 415-425 shows a compositional bias: acidic residues; that stretch reads PDWEDSPEVST. Basic and acidic residues-rich tracts occupy residues 444-458 and 466-475; these read LRVK…ELVR and QLEEGQKGQE. Ser-484 and Ser-520 each carry phosphoserine. Basic and acidic residues-rich tracts occupy residues 514–531 and 672–687; these read GVDR…EAGK and GRGE…ETTE. A compositionally biased stretch (acidic residues) spans 709–721; sequence QEIDGTEEGEQAE. A compositionally biased stretch (low complexity) spans 837–853; the sequence is SRLDVSVPRSRVLLSRS. The span at 854–863 shows a compositional bias: basic residues; that stretch reads SSRRRSRPSF.

As to quaternary structure, homodimer. Post-translationally, there are 2 forms in macrophages, the membrane-binding proteins 200 kDa (MBP 200) and 235 kDa (MBP 235), that can be reduced into a single active ligand-binding species with intermediate mobility (MBP 200R). In terms of tissue distribution, highly expressed in spleen, lung and skeletal muscle, and weakly in brain, heart, kidney, and testis.

The protein localises to the cell membrane. Functionally, macrophage receptor that binds to the apolipoprotein B48 (APOB) of dietary triglyceride (TG)-rich lipoproteins (TRL) or to a like domain of APOB in hypertriglyceridemic very low density lipoprotein (HTG-VLDL). Binds and internalizes TRL when out of the context of the macrophage. May provide essential lipids to reticuloendothelial cells. Could also be involved in foam cell formation with elevated TRL and remnant lipoprotein (RLP). Mediates the rapid high-affinity uptake of chylomicrons (CM), HTG-VLDL, and trypsinized (tryp) VLDL devoid of APOE in vitro in macrophages. This chain is Apolipoprotein B receptor, found in Mus musculus (Mouse).